The primary structure comprises 293 residues: GPN-loop GTPase 3 (293 aa).

13–18 (GAGKST) is a binding site for GTP. The Gly-Pro-Asn (GPN)-loop; involved in dimer interface motif lies at 70 to 72 (GPN). 176–179 (SKMD) provides a ligand contact to GTP. Residues 272 to 281 (HEAQEPREPN) are compositionally biased toward basic and acidic residues. Positions 272–293 (HEAQEPREPNDEQDVDYEDADI) are disordered. Residues 282 to 293 (DEQDVDYEDADI) are compositionally biased toward acidic residues.

It belongs to the GPN-loop GTPase family. Heterodimers with gpn1 or gpn2. Binds to RNA polymerase II (RNAPII).

In terms of biological role, small GTPase required for proper nuclear import of RNA polymerase II and III (RNAPII and RNAPIII). May act at an RNAP assembly step prior to nuclear import. This chain is GPN-loop GTPase 3, found in Aspergillus fumigatus (strain ATCC MYA-4609 / CBS 101355 / FGSC A1100 / Af293) (Neosartorya fumigata).